Reading from the N-terminus, the 241-residue chain is Cysteine-rich secretory protein 3 (241 aa).

An N-terminal signal peptide occupies residues 1 to 19 (MALMLVLFFLAAVLPPSLL). The 127-residue stretch at 44-170 (SKHNQLRRKV…PLRYFYVCRY (127 aa)) folds into the SCP domain. Residues N118, N132, and N175 are each glycosylated (N-linked (GlcNAc...) asparagine). Intrachain disulfides connect C194/C201, C197/C206, C210/C241, C219/C235, and C226/C239. The 32-residue stretch at 210–241 (CQYKDMSFWCKRLEYVCKHPGLKKRCLATCQC) folds into the ShKT domain.

The protein belongs to the CRISP family. As to quaternary structure, interacts with A1BG. Interacts with KNG1 isoform LMW. Expressed in submandibular gland.

It localises to the cytoplasmic vesicle. The protein localises to the secretory vesicle. In terms of biological role, this protein is supposed to help spermatozoa undergo functional maturation while they move from the testis to the ductus deferens. The sequence is that of Cysteine-rich secretory protein 3 (Crisp3) from Mus musculus (Mouse).